A 1387-amino-acid chain; its full sequence is Regulator of G-protein signaling 12 (1387 aa).

The region spanning 21-97 (SVEVARGRAG…GVLRMVISEG (77 aa)) is the PDZ domain. Ser-171 and Ser-194 each carry phosphoserine. Lys-195 is covalently cross-linked (Glycyl lysine isopeptide (Lys-Gly) (interchain with G-Cter in SUMO2)). Positions 227 to 339 (VAMVVGYLGS…GALRTSCHVF (113 aa)) constitute a PID domain. 2 disordered regions span residues 409–428 (ADAHQNNSTSSNSDSGIGNF) and 442–488 (LGGG…PLET). Over residues 412–428 (HQNNSTSSNSDSGIGNF) the composition is skewed to polar residues. Residues Arg-524 and Arg-633 each carry the omega-N-methylarginine modification. The disordered stretch occupies residues 620–650 (RKTKEDKKSSKLGRGVALAQTSQRTSARRSF). Residues Ser-661 and Ser-671 each carry the phosphoserine modification. Residues 715–832 (SFERLLQDPV…LKSQLYQECV (118 aa)) form the RGS domain. A disordered region spans residues 842–934 (PDSQQVPSSP…ANGGLCRRES (93 aa)). The span at 849–869 (SSPASKHSISSDHSNVSTPKK) shows a compositional bias: low complexity. Phosphoserine occurs at positions 850 and 879. Residues 914–923 (DHGDHAHDAL) are compositionally biased toward basic and acidic residues. At Ser-943 the chain carries Phosphoserine. RBD domains are found at residues 962 to 1032 (KHCC…LGKR) and 1034 to 1104 (LFRL…LEER). A compositionally biased stretch (basic and acidic residues) spans 1103–1117 (ERDPSRGKVSTEKQK). A disordered region spans residues 1103 to 1168 (ERDPSRGKVS…ARDPRLSKRE (66 aa)). The segment covering 1122-1133 (KQSSAVNSSPRN) has biased composition (polar residues). Basic and acidic residues predominate over residues 1151–1168 (IRGENGKSARDPRLSKRE). In terms of domain architecture, GoLoco spans 1187–1209 (AEEFFELISKAQSNRADDQRGLL). Disordered stretches follow at residues 1224–1325 (PGSS…EGTT) and 1349–1387 (ADLTLMGEGDISSPNSTLLPPPPLPQDTPGPTRPGTSRF). A compositionally biased stretch (low complexity) spans 1261–1280 (SDSPATSPASAQSPCSAYSP). Residues 1315 to 1325 (SCISTVQEGTT) are compositionally biased toward polar residues. A compositionally biased stretch (pro residues) spans 1367–1380 (LPPPPLPQDTPGPT).

In terms of assembly, interacts with GNAI1, GNAI2 and GNAI3; the interactions are GDP-dependent. Detected in brain cortex GABAergic neurons, in striatum and substantia nigra, and in the Purkinje cell layer in the cerebellum and hippocampus (at protein level). Expressed at high levels in brain and lung and lower levels in testis, heart, and spleen.

It is found in the nucleus. The protein resides in the cytoplasm. The protein localises to the cell projection. It localises to the dendrite. Its subcellular location is the synapse. Its function is as follows. Regulates G protein-coupled receptor signaling cascades. Inhibits signal transduction by increasing the GTPase activity of G protein alpha subunits, thereby driving them into their inactive GDP-bound form. This is Regulator of G-protein signaling 12 (Rgs12) from Rattus norvegicus (Rat).